Reading from the N-terminus, the 610-residue chain is UvrABC system protein C (610 aa).

The region spanning histidine 13–valine 91 is the GIY-YIG domain. The 36-residue stretch at glycine 201–valine 236 folds into the UVR domain.

Belongs to the UvrC family. Interacts with UvrB in an incision complex.

The protein localises to the cytoplasm. In terms of biological role, the UvrABC repair system catalyzes the recognition and processing of DNA lesions. UvrC both incises the 5' and 3' sides of the lesion. The N-terminal half is responsible for the 3' incision and the C-terminal half is responsible for the 5' incision. In Actinobacillus pleuropneumoniae serotype 3 (strain JL03), this protein is UvrABC system protein C.